The chain runs to 508 residues: Cytochrome P450 monooxygenase BipB (508 aa).

A helical transmembrane segment spans residues 11-31; that stretch reads ELAWLLLGPLVLFYVFKLFIY. A heme-binding site is contributed by Cys448.

The protein belongs to the cytochrome P450 family. Heme is required as a cofactor.

The protein resides in the membrane. It functions in the pathway sesquiterpene biosynthesis. Its function is as follows. Cytochrome P450 monooxygenase; part of the minimal biosynthetic bip cluster that mediates the biosynthesis of bridged polycyclic sesquiterpenoids derived from sativene, isosativene, and longifolene. The sesquiterpene cyclase BipA acts as a versatile cyclase that converts farnesyl diphosphate (FPP) into (-)-sativene as the dominant product and (-)-isosativene and (-)-longifolene as minor ones. The cytochrome P450 monooxygenase BipB then hydroxylates different enantiomeric sesquiterpenes, such as (-)-longifolene and (+)-longifolene, at C-15 and C-14. The C-15- or both C-15- and C-14-hydroxylated products are further oxidized by unclustered oxidases, resulting in a structurally diverse array of sesquiterpenoids. The BipB-catalyzed hydroxylation at C-15 serves as an initiator for the oxidation by the unclustered oxidases. The polypeptide is Cytochrome P450 monooxygenase BipB (Cochliobolus sativus (Common root rot and spot blotch fungus)).